Consider the following 322-residue polypeptide: Transcription initiation factor IIB (322 aa).

Tandem repeats lie at residues 125-213 (SLIN…VRDL) and 224-305 (NFVY…EIAQ).

Belongs to the TFIIB family.

Stabilizes TBP binding to an archaeal box-A promoter. Also responsible for recruiting RNA polymerase II to the pre-initiation complex (DNA-TBP-TFIIB). This chain is Transcription initiation factor IIB, found in Aeropyrum pernix (strain ATCC 700893 / DSM 11879 / JCM 9820 / NBRC 100138 / K1).